Reading from the N-terminus, the 361-residue chain is Chorismate synthase (361 aa).

2 residues coordinate NADP(+): Arg-48 and Arg-54. FMN contacts are provided by residues 125–127, 238–239, Gly-278, 293–297, and Arg-319; these read RSS, NA, and KPTSS.

It belongs to the chorismate synthase family. Homotetramer. The cofactor is FMNH2.

The enzyme catalyses 5-O-(1-carboxyvinyl)-3-phosphoshikimate = chorismate + phosphate. It participates in metabolic intermediate biosynthesis; chorismate biosynthesis; chorismate from D-erythrose 4-phosphate and phosphoenolpyruvate: step 7/7. Functionally, catalyzes the anti-1,4-elimination of the C-3 phosphate and the C-6 proR hydrogen from 5-enolpyruvylshikimate-3-phosphate (EPSP) to yield chorismate, which is the branch point compound that serves as the starting substrate for the three terminal pathways of aromatic amino acid biosynthesis. This reaction introduces a second double bond into the aromatic ring system. The polypeptide is Chorismate synthase (Salmonella dublin (strain CT_02021853)).